We begin with the raw amino-acid sequence, 366 residues long: Capsular polysaccharide phosphotransferase LcbA (366 aa).

This sequence belongs to the stealth family.

The sequence is that of Capsular polysaccharide phosphotransferase LcbA (lcbA) from Neisseria meningitidis.